A 486-amino-acid polypeptide reads, in one-letter code: Transcription enhancer factor-like protein egl-44 (486 aa).

Residues 47 to 57 (GTTTPTTTSGG) show a composition bias toward low complexity. The tract at residues 47 to 87 (GTTTPTTTSGGQMMTLSPPAGDGPGSAGSMAPESTSSLSDL) is disordered. A DNA-binding region (TEA) is located at residues 88–164 (SGDAEGVWSI…QVLARKKLRD (77 aa)). The interval 165 to 188 (EQAKKKGDIPSLLQQASPPGGVKS) is disordered.

As to quaternary structure, interacts (via N-terminus) with egl-46 (via C-terminus); the interaction is direct; the interaction may regulate transcription. Interacts with yap-1 (via WW domain); the interaction may regulate transcription. Expressed in HSN neurons in embryos and in the FLP neurons from the L1 stage through to adults. Not expressed in touch cells. Also expressed in larval hypodermis, intestine, pharyngeal muscle and other neurons. In adults expression is lost from some neurons, is weaker in the hypodermis but remains in the intestine. Expressed in HOB neuron, ray neurons RnA and RnB, and the ray structural cell, Rnst; rays are male-specific genital sensilla (simple sense organs).

The protein resides in the nucleus. In terms of biological role, transcription factor. Binds to DNA sequence motif 5'-CATNNNNAAATGCAT-3' as a heterodimer with egl-46. Represses expression of genes involved in differentiation of touch receptor neurons (TRN), probably acting as a heterodimer with egl-46, perhaps by occupying similar cis-regulatory elements as an unc-86/mec-3 heterodimer. Plays a role in cell fate specification of neurons, including the hook neuron HOB, and touch receptor neurons. Involved in male mating behavior, acting in concert with egl-46, via modulation of expression of polycystins lov-1 and pkd-2, homeodomain protein ceh-26, and neuropeptide-like protein nlp-8. Acts upstream of egl-46 to prevent touch cell differentiation in FLP neurons. Plays a role in neuron differentiation by repressing the expression of zag-1 in FLP neurons, probably acting as a heterodimer with egl-46; because zag-1 represses expression of egl-46 and egl-44, together these proteins form a bistable, negative-feedback loop that regulates the choice between neuronal fates. Also promotes HSN neuron development. In association with egl-46, regulates cell cycle exit in the neuronal Q cell lineage. Plays a role in specifying commissural dendrites of the PVD nociceptive neurons, acting in concert with egl-46. May be involved in thermal stress response downstream of yap-1. The protein is Transcription enhancer factor-like protein egl-44 (egl-44) of Caenorhabditis elegans.